Consider the following 134-residue polypeptide: Putative STAG3-like protein 2 (134 aa).

One can recognise an SCD domain in the interval 10-95 (PKVTCRDVLP…GRFKDWMVSM (86 aa)).

It belongs to the SCC3 family.

It localises to the nucleus. This is Putative STAG3-like protein 2 (STAG3L2) from Homo sapiens (Human).